We begin with the raw amino-acid sequence, 252 residues long: Serine/threonine phosphatase stp (252 aa).

Basic and acidic residues predominate over residues 1–18 (MHAEFRTDRGRIRHHNED). Positions 1 to 23 (MHAEFRTDRGRIRHHNEDNGGVF) are disordered. The 241-residue stretch at 2–242 (HAEFRTDRGR…DNITVLLVER (241 aa)) folds into the PPM-type phosphatase domain. Residues Asp36, Gly37, Asp194, and Asp233 each coordinate Mn(2+).

This sequence belongs to the PP2C family. The cofactor is Mn(2+).

It localises to the cytoplasm. The protein localises to the membrane. The catalysed reaction is O-phospho-L-seryl-[protein] + H2O = L-seryl-[protein] + phosphate. It catalyses the reaction O-phospho-L-threonyl-[protein] + H2O = L-threonyl-[protein] + phosphate. In terms of biological role, protein phosphatase that dephosphorylates EF-Tu. The chain is Serine/threonine phosphatase stp (stp) from Listeria welshimeri serovar 6b (strain ATCC 35897 / DSM 20650 / CCUG 15529 / CIP 8149 / NCTC 11857 / SLCC 5334 / V8).